Reading from the N-terminus, the 201-residue chain is Small ribosomal subunit protein uS4c (201 aa).

An S4 RNA-binding domain is found at 89–150; the sequence is MRLDNILFRL…KERSKALIQN (62 aa).

It belongs to the universal ribosomal protein uS4 family. In terms of assembly, part of the 30S ribosomal subunit. Contacts protein S5. The interaction surface between S4 and S5 is involved in control of translational fidelity.

Its subcellular location is the plastid. It localises to the chloroplast. Its function is as follows. One of the primary rRNA binding proteins, it binds directly to 16S rRNA where it nucleates assembly of the body of the 30S subunit. With S5 and S12 plays an important role in translational accuracy. This is Small ribosomal subunit protein uS4c (rps4) from Phalaenopsis aphrodite subsp. formosana (Moth orchid).